The chain runs to 137 residues: Profilin-3 (137 aa).

The protein belongs to the profilin family. In terms of assembly, interacts with ACTRT3. Testis specific.

The protein localises to the cytoplasm. It is found in the cytoskeleton. It localises to the nucleus. Binds to actin and affects the structure of the cytoskeleton. Slightly reduces actin polymerization. Binds to poly-L-proline, phosphatidylinositol 3-phosphate (PtdIns(3)P), phosphatidylinositol 4,5-bisphosphate (PtdIns(4,5)P2) and phosphatidylinositol 4-phosphate (PtdIns(4)P). May be involved in spermatogenesis. This is Profilin-3 (PFN3) from Homo sapiens (Human).